The following is a 125-amino-acid chain: UPF0332 protein AF_0298 (125 aa).

It belongs to the UPF0332 family.

This Archaeoglobus fulgidus (strain ATCC 49558 / DSM 4304 / JCM 9628 / NBRC 100126 / VC-16) protein is UPF0332 protein AF_0298.